The sequence spans 156 residues: Peptide deformylase 1 (156 aa).

Fe cation contacts are provided by Cys-90 and His-132. Glu-133 is a catalytic residue. Residue His-136 participates in Fe cation binding.

This sequence belongs to the polypeptide deformylase family. Fe(2+) is required as a cofactor.

The enzyme catalyses N-terminal N-formyl-L-methionyl-[peptide] + H2O = N-terminal L-methionyl-[peptide] + formate. Its function is as follows. Removes the formyl group from the N-terminal Met of newly synthesized proteins. Requires at least a dipeptide for an efficient rate of reaction. N-terminal L-methionine is a prerequisite for activity but the enzyme has broad specificity at other positions. The polypeptide is Peptide deformylase 1 (Bacillus cereus (strain ATCC 14579 / DSM 31 / CCUG 7414 / JCM 2152 / NBRC 15305 / NCIMB 9373 / NCTC 2599 / NRRL B-3711)).